We begin with the raw amino-acid sequence, 587 residues long: Aspartate--tRNA ligase (587 aa).

E174 is an L-aspartate binding site. An aspartate region spans residues Q198 to K201. An L-aspartate-binding site is contributed by R220. Residues R220–E222 and Q229 contribute to the ATP site. Residue H443 coordinates L-aspartate. E477 contacts ATP. R484 serves as a coordination point for L-aspartate. Position 529–532 (G529–R532) interacts with ATP.

Belongs to the class-II aminoacyl-tRNA synthetase family. Type 1 subfamily. Homodimer.

The protein resides in the cytoplasm. The catalysed reaction is tRNA(Asp) + L-aspartate + ATP = L-aspartyl-tRNA(Asp) + AMP + diphosphate. Catalyzes the attachment of L-aspartate to tRNA(Asp) in a two-step reaction: L-aspartate is first activated by ATP to form Asp-AMP and then transferred to the acceptor end of tRNA(Asp). This Streptococcus pneumoniae (strain Taiwan19F-14) protein is Aspartate--tRNA ligase.